Consider the following 373-residue polypeptide: Transcription factor bHLH87 (373 aa).

Positions 127 to 227 (SAESENREIT…GGSSNISFQH (101 aa)) are disordered. Positions 188–218 (PQDDSEKGGFKLIYDENQSKSKKPRTEKERG) are enriched in basic and acidic residues. The bHLH domain maps to 275-324 (ISTDPQTVAARQRRERISEKIRVLQTLVPGGTKMDTASMLDEAANYLKFL).

As to quaternary structure, homodimer. In terms of tissue distribution, flowers.

The protein localises to the nucleus. In Arabidopsis thaliana (Mouse-ear cress), this protein is Transcription factor bHLH87 (BHLH87).